Reading from the N-terminus, the 175-residue chain is Large ribosomal subunit protein uL10 (175 aa).

It belongs to the universal ribosomal protein uL10 family. Part of the ribosomal stalk of the 50S ribosomal subunit. The N-terminus interacts with L11 and the large rRNA to form the base of the stalk. The C-terminus forms an elongated spine to which L12 dimers bind in a sequential fashion forming a multimeric L10(L12)X complex.

Its function is as follows. Forms part of the ribosomal stalk, playing a central role in the interaction of the ribosome with GTP-bound translation factors. This is Large ribosomal subunit protein uL10 from Psychrobacter arcticus (strain DSM 17307 / VKM B-2377 / 273-4).